The primary structure comprises 203 residues: Imidazoleglycerol-phosphate dehydratase (203 aa).

It belongs to the imidazoleglycerol-phosphate dehydratase family.

The protein resides in the cytoplasm. The catalysed reaction is D-erythro-1-(imidazol-4-yl)glycerol 3-phosphate = 3-(imidazol-4-yl)-2-oxopropyl phosphate + H2O. The protein operates within amino-acid biosynthesis; L-histidine biosynthesis; L-histidine from 5-phospho-alpha-D-ribose 1-diphosphate: step 6/9. The sequence is that of Imidazoleglycerol-phosphate dehydratase from Salinispora tropica (strain ATCC BAA-916 / DSM 44818 / JCM 13857 / NBRC 105044 / CNB-440).